Reading from the N-terminus, the 118-residue chain is Protein TusC (118 aa).

It belongs to the DsrF/TusC family. In terms of assembly, heterohexamer, formed by a dimer of trimers. The hexameric TusBCD complex contains 2 copies each of TusB, TusC and TusD. The TusBCD complex interacts with TusE.

The protein localises to the cytoplasm. Its function is as follows. Part of a sulfur-relay system required for 2-thiolation of 5-methylaminomethyl-2-thiouridine (mnm(5)s(2)U) at tRNA wobble positions. In Salmonella paratyphi C (strain RKS4594), this protein is Protein TusC.